A 220-amino-acid polypeptide reads, in one-letter code: Adenylate kinase (220 aa).

An ATP-binding site is contributed by 10-15 (GAGKGT). An NMP region spans residues 30 to 59 (STGDMLRAAVKAGSPLGVEAKGYMDAGKLV). AMP-binding positions include Thr-31, Arg-36, 57-59 (KLV), 85-88 (GFPR), and Gln-92. The segment at 122 to 159 (GRRTHPASGRTYHVKFNPPKVEGKDDVTGEPLIQRDDD) is LID. ATP is bound by residues Arg-123 and 132 to 133 (TY). AMP is bound by residues Arg-156 and Arg-167. Residue Gly-206 participates in ATP binding.

The protein belongs to the adenylate kinase family. In terms of assembly, monomer.

The protein resides in the cytoplasm. The catalysed reaction is AMP + ATP = 2 ADP. It participates in purine metabolism; AMP biosynthesis via salvage pathway; AMP from ADP: step 1/1. Its function is as follows. Catalyzes the reversible transfer of the terminal phosphate group between ATP and AMP. Plays an important role in cellular energy homeostasis and in adenine nucleotide metabolism. The sequence is that of Adenylate kinase from Burkholderia ambifaria (strain ATCC BAA-244 / DSM 16087 / CCUG 44356 / LMG 19182 / AMMD) (Burkholderia cepacia (strain AMMD)).